Here is a 329-residue protein sequence, read N- to C-terminus: POU domain, class 5, transcription factor 2 (329 aa).

The span at 1–14 shows a compositional bias: polar residues; the sequence is MAGRRSSNVFPLSG. A disordered region spans residues 1–24; the sequence is MAGRRSSNVFPLSGNSGGGLEVDT. Residues 107-181 enclose the POU-specific domain; that stretch reads DVSAIQKEME…LLKMWLEEVD (75 aa). The segment at residues 199–258 is a DNA-binding region (homeobox); that stretch reads RKRRRASRERRIGSNLEKLFLQCPEPTPQQISYIAGRLRLQKDLVQVWFSNRSQMGSWPT.

It belongs to the POU transcription factor family. Class-5 subfamily. In terms of tissue distribution, in adult brain, expressed in the olfactory bulb, becoming specifically concentrated in the mitral cell layer. Also found in the pyramidal cell layer of the hippocampus, in the granule cell layer of the cerebellum and in the cortex.

It is found in the nucleus. Its function is as follows. Transcription factor that binds preferentially to the octamer motif (5'-ATGTTAAT-3'). May exert a regulatory function in meiotic events that are required for terminal differentiation of male germ cell. The polypeptide is POU domain, class 5, transcription factor 2 (Pou5f2) (Mus musculus (Mouse)).